We begin with the raw amino-acid sequence, 253 residues long: Sulfate transporter CysZ (253 aa).

A run of 4 helical transmembrane segments spans residues 31 to 51 (FVILPLLVNILLMGGAFWWLF), 75 to 95 (LLWPLAVISVLLVFGYFFSTI), 151 to 171 (IVLLILYLIPGIGQTVTPVLW), and 222 to 242 (IPLLNLFIMPVAVCGATAMWV).

The protein belongs to the CysZ family.

Its subcellular location is the cell inner membrane. Functionally, high affinity, high specificity proton-dependent sulfate transporter, which mediates sulfate uptake. Provides the sulfur source for the cysteine synthesis pathway. This is Sulfate transporter CysZ from Escherichia coli O8 (strain IAI1).